The sequence spans 108 residues: Small ribosomal subunit protein eS25y (108 aa).

The tract at residues 1–36 (MAPKKDKVPPPSSKPAKSGGGKQKKKKWSKGKQKEK) is disordered. Positions 22–31 (KQKKKKWSKG) are enriched in basic residues.

The protein belongs to the eukaryotic ribosomal protein eS25 family.

This is Small ribosomal subunit protein eS25y (RPS25B) from Arabidopsis thaliana (Mouse-ear cress).